The chain runs to 1429 residues: MGARASVLSGGKLDKWEKIQLRPGGKKKYRLKHLVWASRELERFALNPNLLETVEGCRQIIRQLQPSLQTGSEELRSLFNTVATLYWVHQSIQVRDTKEALDKLEEEQNRTQQKTQQGKADKGVSQNYPIVQNLQGQMVHQALSPRTLNAWVKVIEEKAFSPEVIPMFSALSEGATPQDLNTMLNTVGGHQAAMQMLKDTINEEAAEWDRMHPVQAGPIPPGQIREPRGSDIAGTTSTLQEQITWMTSNPPIPVGEIYKRWIILGLNKIVRMYSPVSILDIRQGPKEPFRDYVDRFFRVLRAEQATQEVKNWMTETLLVQNANPDCRTILKALGSGATLEEMMTACQGVGGPGHKARVLAEAMSQVTNSAVMMQRGNFKGQRRIIKCFNCGKEGHLARNCRAPRKKGCWKCGKEGHQMKDCSERQANFFREVLASQQREARKFSSEQTRANSPTSRELWVRGEDNPLSETGNERSGTGSSFNFPQITLWQRPVVTVKVGGQLREALLDTGADDTVLEEINLPGKWKPKMIGGIGGFIKVRQYDQVCMEICGQKAIGTVLVGPTPVNIIGRNMLTQIGCTLNFPISPIETVPVKLKPGMDGPKVKQWPLTEEKIKALVEICTEMEKEGKISKIGPENPYNTPVFAIKKKDSTKWIKLVDFRELNKRTPDFWEVQLGIPHPAGLKKKKSVTVLDVGDAYFSVPLDKDFRKYTAFTIPSINNETPGIRYQYNVLPQGWKGSPAIFQCSMTKILEPFRRKNPDMVLYQYMDDLYVGSDLEIGQHRAKIEELREHLLRWGFTTPDKKHQKEPPFLWMGYELHPDKWTVQPIQLPDKDSWTVNDIQKLVGKLNWASQIFPGIKVKQLCKLLRGVKALTDIVPLTAEAELELAENREILKEPVHGVYYDPSKDLIAEIQKQGHGQWTYQIYQEPYKNLKTGKYARIRSAHTNDVKQLTEVVQKVAMESIVIWGKTPKFRLPIQKETWGTWWTEYWQATWIPEWEFVNTPPLVKLWYQLETEPIVGAETFYVDGAANRETKQGKAGYVTDKGRQKVISITETTNQKTELQAIHLALQDSGSEVNIVTDSQYALGIIQAQPDKSESELVNQIIEQLIKKDRVYLSWVPAHKGIGGNEQVDKLVSSGIRKVLFLDGIDKAQEEHEKYHNNWRAMASDFNLPPVVAKEIVASCDKCQLKGEAIHGQVDCSPGIWQLDCTHLEGKIILVAVHVASGYIEAEVIPAETGQETAYFILKLAGRWPVRVIHTDNGSNFTSAVVKAACWWADIKQEFGIPYNPQSQGVVESMNKELKKIIGQVREQAEHLKTAVQMAVFIHNFKRKGGIGGYSAGERIIDIIATDIQTKELQKQITKIQNFRVYYRDSREPIWKGPAKLLWKGEGAVVIQNSEIKVVPRRKAKIIRDYGKQMAGDDCVAGRQDED.

The N-myristoyl glycine; by host moiety is linked to residue Gly-2. The segment at 7–31 (VLSGGKLDKWEKIQLRPGGKKKYRL) is interaction with Gp41. The interaction with host CALM1 stretch occupies residues 8 to 43 (LSGGKLDKWEKIQLRPGGKKKYRLKHLVWASRELER). The interaction with host AP3D1 stretch occupies residues 12 to 19 (KLDKWEKI). The interaction with membrane phosphatidylinositol 4,5-bisphosphate and RNA stretch occupies residues 14 to 33 (DKWEKIQLRPGGKKKYRLKH). The Nuclear export signal signature appears at 16–22 (WEKIQLR). A Nuclear localization signal motif is present at residues 26 to 32 (KKKYRLK). Residues 73-77 (EELRS) form an interaction with membrane phosphatidylinositol 4,5-bisphosphate region. Positions 105–124 (EEEQNRTQQKTQQGKADKGV) are disordered. Over residues 110-124 (RTQQKTQQGKADKGV) the composition is skewed to polar residues. A Phosphotyrosine; by host modification is found at Tyr-128. The interval 185–223 (NTVGGHQAAMQMLKDTINEEAAEWDRMHPVQAGPIPPGQ) is interaction with human PPIA/CYPA and NUP153. A dimerization/Multimerization of capsid protein p24 region spans residues 273–359 (YSPVSILDIR…GGPGHKARVL (87 aa)). CCHC-type zinc fingers lie at residues 385-402 (IKCFNCGKEGHLARNCRA) and 406-423 (KGCWKCGKEGHQMKDCSE). The disordered stretch occupies residues 439-479 (EARKFSSEQTRANSPTSRELWVRGEDNPLSETGNERSGTGS). Polar residues-rich tracts occupy residues 445–455 (SEQTRANSPTS) and 467–479 (LSETGNERSGTGS). The interval 484–488 (PQITL) is dimerization of protease. A Peptidase A2 domain is found at 503 to 572 (REALLDTGAD…TPVNIIGRNM (70 aa)). Asp-508 (for protease activity; shared with dimeric partner) is an active-site residue. Dimerization of protease regions lie at residues 532 to 538 (GIGGFIK) and 571 to 583 (NMLTQIGCTLNFP). The Reverse transcriptase domain maps to 626-816 (EGKISKIGPE…PPFLWMGYEL (191 aa)). Mg(2+) contacts are provided by Asp-692, Asp-767, and Asp-768. The RT 'primer grip' stretch occupies residues 809-817 (FLWMGYELH). Positions 980-996 (WGTWWTEYWQATWIPEW) match the Tryptophan repeat motif motif. The region spanning 1016–1139 (IVGAETFYVD…VDKLVSSGIR (124 aa)) is the RNase H type-1 domain. The Mg(2+) site is built by Asp-1025, Glu-1060, Asp-1080, and Asp-1131. Residues 1145–1186 (DGIDKAQEEHEKYHNNWRAMASDFNLPPVVAKEIVASCDKCQ) form an Integrase-type zinc finger. His-1154, His-1158, Cys-1182, and Cys-1185 together coordinate Zn(2+). An Integrase catalytic domain is found at 1196–1346 (VDCSPGIWQL…SAGERIIDII (151 aa)). Mg(2+) is bound by residues Asp-1206, Asp-1258, and Glu-1294. A DNA-binding region (integrase-type) is located at residues 1365–1411 (FRVYYRDSREPIWKGPAKLLWKGEGAVVIQNSEIKVVPRRKAKIIRD).

Homotrimer; further assembles as hexamers of trimers. Interacts with gp41 (via C-terminus). Interacts with host CALM1; this interaction induces a conformational change in the Matrix protein, triggering exposure of the myristate group. Interacts with host AP3D1; this interaction allows the polyprotein trafficking to multivesicular bodies during virus assembly. Part of the pre-integration complex (PIC) which is composed of viral genome, matrix protein, Vpr and integrase. In terms of assembly, homodimer; the homodimer further multimerizes as homohexamers or homopentamers. Interacts with human PPIA/CYPA; This interaction stabilizes the capsid. Interacts with human NUP153. Interacts with host PDZD8; this interaction stabilizes the capsid. Interacts with monkey TRIM5; this interaction destabilizes the capsid. As to quaternary structure, homodimer, whose active site consists of two apposed aspartic acid residues. Heterodimer of p66 RT and p51 RT (RT p66/p51). Heterodimerization of RT is essential for DNA polymerase activity. The overall folding of the subdomains is similar in p66 RT and p51 RT but the spatial arrangements of the subdomains are dramatically different. In terms of assembly, homotetramer; may further associate as a homohexadecamer. Part of the pre-integration complex (PIC) which is composed of viral genome, matrix protein, Vpr and integrase. Interacts with human SMARCB1/INI1 and human PSIP1/LEDGF isoform 1. Interacts with human KPNA3; this interaction might play a role in nuclear import of the pre-integration complex. Interacts with human NUP153; this interaction might play a role in nuclear import of the pre-integration complex. Mg(2+) serves as cofactor. Specific enzymatic cleavages by the viral protease yield mature proteins. The protease is released by autocatalytic cleavage. The polyprotein is cleaved during and after budding, this process is termed maturation. Proteolytic cleavage of p66 RT removes the RNase H domain to yield the p51 RT subunit. Nucleocapsid protein p7 might be further cleaved after virus entry. Post-translationally, tyrosine phosphorylated presumably in the virion by a host kinase. Phosphorylation is apparently not a major regulator of membrane association. In terms of processing, phosphorylated possibly by host MAPK1; this phosphorylation is necessary for Pin1-mediated virion uncoating. Methylated by host PRMT6, impairing its function by reducing RNA annealing and the initiation of reverse transcription.

It localises to the host cell membrane. Its subcellular location is the host endosome. The protein resides in the host multivesicular body. It is found in the virion membrane. The protein localises to the host nucleus. It localises to the host cytoplasm. Its subcellular location is the virion. It catalyses the reaction Specific for a P1 residue that is hydrophobic, and P1' variable, but often Pro.. It carries out the reaction Endohydrolysis of RNA in RNA/DNA hybrids. Three different cleavage modes: 1. sequence-specific internal cleavage of RNA. Human immunodeficiency virus type 1 and Moloney murine leukemia virus enzymes prefer to cleave the RNA strand one nucleotide away from the RNA-DNA junction. 2. RNA 5'-end directed cleavage 13-19 nucleotides from the RNA end. 3. DNA 3'-end directed cleavage 15-20 nucleotides away from the primer terminus.. The enzyme catalyses 3'-end directed exonucleolytic cleavage of viral RNA-DNA hybrid.. The catalysed reaction is DNA(n) + a 2'-deoxyribonucleoside 5'-triphosphate = DNA(n+1) + diphosphate. Protease: The viral protease is inhibited by many synthetic protease inhibitors (PIs), such as amprenavir, atazanavir, indinavir, loprinavir, nelfinavir, ritonavir and saquinavir. Use of protease inhibitors in tritherapy regimens permit more ambitious therapeutic strategies. Reverse transcriptase/ribonuclease H: RT can be inhibited either by nucleoside RT inhibitors (NRTIs) or by non nucleoside RT inhibitors (NNRTIs). NRTIs act as chain terminators, whereas NNRTIs inhibit DNA polymerization by binding a small hydrophobic pocket near the RT active site and inducing an allosteric change in this region. Classical NRTIs are abacavir, adefovir (PMEA), didanosine (ddI), lamivudine (3TC), stavudine (d4T), tenofovir (PMPA), zalcitabine (ddC), and zidovudine (AZT). Classical NNRTIs are atevirdine (BHAP U-87201E), delavirdine, efavirenz (DMP-266), emivirine (I-EBU), and nevirapine (BI-RG-587). The tritherapies used as a basic effective treatment of AIDS associate two NRTIs and one NNRTI. Mediates, with Gag polyprotein, the essential events in virion assembly, including binding the plasma membrane, making the protein-protein interactions necessary to create spherical particles, recruiting the viral Env proteins, and packaging the genomic RNA via direct interactions with the RNA packaging sequence (Psi). Gag-Pol polyprotein may regulate its own translation, by the binding genomic RNA in the 5'-UTR. At low concentration, the polyprotein would promote translation, whereas at high concentration, the polyprotein would encapsidate genomic RNA and then shut off translation. In terms of biological role, targets the polyprotein to the plasma membrane via a multipartite membrane-binding signal, that includes its myristoylated N-terminus. Matrix protein is part of the pre-integration complex. Implicated in the release from host cell mediated by Vpu. Binds to RNA. Its function is as follows. Forms the conical core that encapsulates the genomic RNA-nucleocapsid complex in the virion. Most core are conical, with only 7% tubular. The core is constituted by capsid protein hexamer subunits. The core is disassembled soon after virion entry. Host restriction factors such as TRIM5-alpha or TRIMCyp bind retroviral capsids and cause premature capsid disassembly, leading to blocks in reverse transcription. Capsid restriction by TRIM5 is one of the factors which restricts HIV-1 to the human species. Host PIN1 apparently facilitates the virion uncoating. On the other hand, interactions with PDZD8 or CYPA stabilize the capsid. Functionally, encapsulates and protects viral dimeric unspliced genomic RNA (gRNA). Binds these RNAs through its zinc fingers. Acts as a nucleic acid chaperone which is involved in rearangement of nucleic acid secondary structure during gRNA retrotranscription. Also facilitates template switch leading to recombination. As part of the polyprotein, participates in gRNA dimerization, packaging, tRNA incorporation and virion assembly. Aspartyl protease that mediates proteolytic cleavages of Gag and Gag-Pol polyproteins during or shortly after the release of the virion from the plasma membrane. Cleavages take place as an ordered, step-wise cascade to yield mature proteins. This process is called maturation. Displays maximal activity during the budding process just prior to particle release from the cell. Also cleaves Nef and Vif, probably concomitantly with viral structural proteins on maturation of virus particles. Hydrolyzes host EIF4GI and PABP1 in order to shut off the capped cellular mRNA translation. The resulting inhibition of cellular protein synthesis serves to ensure maximal viral gene expression and to evade host immune response. Also mediates cleavage of host YTHDF3. Mediates cleavage of host CARD8, thereby activating the CARD8 inflammasome, leading to the clearance of latent HIV-1 in patient CD4(+) T-cells after viral reactivation; in contrast, HIV-1 can evade CARD8-sensing when its protease remains inactive in infected cells prior to viral budding. In terms of biological role, multifunctional enzyme that converts the viral RNA genome into dsDNA in the cytoplasm, shortly after virus entry into the cell. This enzyme displays a DNA polymerase activity that can copy either DNA or RNA templates, and a ribonuclease H (RNase H) activity that cleaves the RNA strand of RNA-DNA heteroduplexes in a partially processive 3' to 5' endonucleasic mode. Conversion of viral genomic RNA into dsDNA requires many steps. A tRNA(3)-Lys binds to the primer-binding site (PBS) situated at the 5'-end of the viral RNA. RT uses the 3' end of the tRNA primer to perform a short round of RNA-dependent minus-strand DNA synthesis. The reading proceeds through the U5 region and ends after the repeated (R) region which is present at both ends of viral RNA. The portion of the RNA-DNA heteroduplex is digested by the RNase H, resulting in a ssDNA product attached to the tRNA primer. This ssDNA/tRNA hybridizes with the identical R region situated at the 3' end of viral RNA. This template exchange, known as minus-strand DNA strong stop transfer, can be either intra- or intermolecular. RT uses the 3' end of this newly synthesized short ssDNA to perform the RNA-dependent minus-strand DNA synthesis of the whole template. RNase H digests the RNA template except for two polypurine tracts (PPTs) situated at the 5'-end and near the center of the genome. It is not clear if both polymerase and RNase H activities are simultaneous. RNase H probably can proceed both in a polymerase-dependent (RNA cut into small fragments by the same RT performing DNA synthesis) and a polymerase-independent mode (cleavage of remaining RNA fragments by free RTs). Secondly, RT performs DNA-directed plus-strand DNA synthesis using the PPTs that have not been removed by RNase H as primers. PPTs and tRNA primers are then removed by RNase H. The 3' and 5' ssDNA PBS regions hybridize to form a circular dsDNA intermediate. Strand displacement synthesis by RT to the PBS and PPT ends produces a blunt ended, linear dsDNA copy of the viral genome that includes long terminal repeats (LTRs) at both ends. Its function is as follows. Catalyzes viral DNA integration into the host chromosome, by performing a series of DNA cutting and joining reactions. This enzyme activity takes place after virion entry into a cell and reverse transcription of the RNA genome in dsDNA. The first step in the integration process is 3' processing. This step requires a complex comprising the viral genome, matrix protein, Vpr and integrase. This complex is called the pre-integration complex (PIC). The integrase protein removes 2 nucleotides from each 3' end of the viral DNA, leaving recessed CA OH's at the 3' ends. In the second step, the PIC enters cell nucleus. This process is mediated through integrase and Vpr proteins, and allows the virus to infect a non dividing cell. This ability to enter the nucleus is specific of lentiviruses, other retroviruses cannot and rely on cell division to access cell chromosomes. In the third step, termed strand transfer, the integrase protein joins the previously processed 3' ends to the 5' ends of strands of target cellular DNA at the site of integration. The 5'-ends are produced by integrase-catalyzed staggered cuts, 5 bp apart. A Y-shaped, gapped, recombination intermediate results, with the 5'-ends of the viral DNA strands and the 3' ends of target DNA strands remaining unjoined, flanking a gap of 5 bp. The last step is viral DNA integration into host chromosome. This involves host DNA repair synthesis in which the 5 bp gaps between the unjoined strands are filled in and then ligated. Since this process occurs at both cuts flanking the HIV genome, a 5 bp duplication of host DNA is produced at the ends of HIV-1 integration. Alternatively, Integrase may catalyze the excision of viral DNA just after strand transfer, this is termed disintegration. This chain is Gag-Pol polyprotein (gag-pol), found in Homo sapiens (Human).